The primary structure comprises 155 residues: RNA pyrophosphohydrolase (155 aa).

The Nudix hydrolase domain occupies 5-147 (KYRPNVAAII…KRQVYRQVIA (143 aa)). A Nudix box motif is present at residues 42-63 (GGIDEGETPLEALHRELLEEIG).

It belongs to the Nudix hydrolase family. RppH subfamily. The cofactor is a divalent metal cation.

In terms of biological role, accelerates the degradation of transcripts by removing pyrophosphate from the 5'-end of triphosphorylated RNA, leading to a more labile monophosphorylated state that can stimulate subsequent ribonuclease cleavage. This chain is RNA pyrophosphohydrolase, found in Helicobacter pylori (strain ATCC 700392 / 26695) (Campylobacter pylori).